A 180-amino-acid chain; its full sequence is Calcineurin subunit B type 1 (180 aa).

Residue glycine 2 is the site of N-myristoyl glycine attachment. 4 EF-hand domains span residues 25–60, 62–92, 94–129, and 135–170; these read AELK…ALNP, LERV…LSHK, TKED…MVGT, and QLQQ…QEGI. Aspartate 38, aspartate 40, serine 42, threonine 44, glutamate 49, aspartate 70, asparagine 72, aspartate 74, glutamate 76, glutamate 81, aspartate 107, aspartate 109, aspartate 111, and glutamate 118 together coordinate Ca(2+). The segment at 138–143 is canA/calcineurin A binding; it reads QIVDKT. Ca(2+) is bound by residues aspartate 148, aspartate 150, aspartate 152, lysine 154, and glutamate 159.

The protein belongs to the calcineurin regulatory subunit family. In terms of assembly, forms a complex composed of a calmodulin-dependent catalytic subunit canA (also known as calcineurin A) and a regulatory Ca(2+)-binding subunit cnbA (also known as calcineurin B).

Functionally, regulatory subunit of calcineurin, a calcium-dependent, calmodulin stimulated protein phosphatase. Confers calcium sensitivity. Important for stalk formation. The protein is Calcineurin subunit B type 1 (cnbA) of Dictyostelium discoideum (Social amoeba).